Consider the following 677-residue polypeptide: WD repeat-containing protein 43 (677 aa).

WD repeat units lie at residues 11–51, 57–119, 124–163, 166–205, 207–259, and 267–309; these read PLAP…LHQE, HLSG…LHSK, GHDN…VKCK, GDNS…RHFT, HATP…KEKS, and TDEP…YCKK. Ser-77 carries the post-translational modification Phosphoserine. A Glycyl lysine isopeptide (Lys-Gly) (interchain with G-Cter in SUMO1); alternate cross-link involves residue Lys-309. Lys-309 participates in a covalent cross-link: Glycyl lysine isopeptide (Lys-Gly) (interchain with G-Cter in SUMO2); alternate. A Phosphothreonine modification is found at Thr-321. A Glycyl lysine isopeptide (Lys-Gly) (interchain with G-Cter in SUMO1); alternate cross-link involves residue Lys-384. Lys-384 is covalently cross-linked (Glycyl lysine isopeptide (Lys-Gly) (interchain with G-Cter in SUMO2); alternate). The residue at position 394 (Thr-394) is a Phosphothreonine. A phosphoserine mark is found at Ser-399, Ser-431, Ser-437, and Ser-590. 2 disordered regions span residues 414–445 and 582–677; these read AIKP…LGAM and SEKT…SEEE. The segment covering 582-592 has biased composition (polar residues); it reads SEKTKGATSPG. Residues 600-652 show a composition bias toward acidic residues; sequence EEESSEEESDDEIADKDSEDNWDEDEEESESEKDEDVEEEDEDAEGKDEENGE. Positions 653–663 are enriched in basic and acidic residues; that stretch reads DRDTASEKELN. At Thr-656 the chain carries Phosphothreonine. The residue at position 658 (Ser-658) is a Phosphoserine. Residues 664 to 677 are compositionally biased toward acidic residues; that stretch reads GDSDLDPENESEEE.

This sequence belongs to the UTP5 family. In terms of assembly, part of the small subunit (SSU) processome, composed of more than 70 proteins and the RNA chaperone small nucleolar RNA (snoRNA) U3. May be a component of the proposed t-UTP subcomplex of the ribosomal small subunit (SSU) processome containing at least UTP4, WDR43, HEATR1, UTP15, WDR75. Binds to RNA; binding is required for its chromatin association. Interacts with CDK9, DDX21 and SUPT6H. Interacts with RNA polymerase II. Interacts directly with UTP4 and UTP15.

It localises to the nucleus. The protein resides in the nucleolus. Its subcellular location is the nucleolus fibrillar center. It is found in the nucleoplasm. Functionally, ribosome biogenesis factor that coordinates hyperactive transcription and ribogenesis. Part of the small subunit (SSU) processome, first precursor of the small eukaryotic ribosomal subunit. During the assembly of the SSU processome in the nucleolus, many ribosome biogenesis factors, an RNA chaperone and ribosomal proteins associate with the nascent pre-rRNA and work in concert to generate RNA folding, modifications, rearrangements and cleavage as well as targeted degradation of pre-ribosomal RNA by the RNA exosome. Involved in nucleolar processing of pre-18S ribosomal RNA. Required for optimal pre-ribosomal RNA transcription by RNA polymerase I. Essential for stem cell pluripotency and embryonic development. In the nucleoplasm, recruited by promoter-associated/nascent transcripts and transcription to active promoters where it facilitates releases of elongation factor P-TEFb and paused RNA polymerase II to allow transcription elongation and maintain high-level expression of its targets genes. The chain is WD repeat-containing protein 43 from Homo sapiens (Human).